The primary structure comprises 242 residues: Probable transcriptional regulatory protein PG_0097 (242 aa).

The protein belongs to the TACO1 family.

It is found in the cytoplasm. The protein is Probable transcriptional regulatory protein PG_0097 of Porphyromonas gingivalis (strain ATCC BAA-308 / W83).